The sequence spans 426 residues: Glutamate-1-semialdehyde 2,1-aminomutase (426 aa).

Residue lysine 263 is modified to N6-(pyridoxal phosphate)lysine.

It belongs to the class-III pyridoxal-phosphate-dependent aminotransferase family. HemL subfamily. Homodimer. Pyridoxal 5'-phosphate serves as cofactor.

It localises to the cytoplasm. It carries out the reaction (S)-4-amino-5-oxopentanoate = 5-aminolevulinate. It participates in porphyrin-containing compound metabolism; protoporphyrin-IX biosynthesis; 5-aminolevulinate from L-glutamyl-tRNA(Glu): step 2/2. The chain is Glutamate-1-semialdehyde 2,1-aminomutase from Dichelobacter nodosus (strain VCS1703A).